Reading from the N-terminus, the 543-residue chain is Myotubularin-related protein 9-like (543 aa).

A Myotubularin phosphatase domain is found at 124-502 (AWHFHPPECY…QSLRLWQGLF (379 aa)).

Belongs to the protein-tyrosine phosphatase family. Non-receptor class myotubularin subfamily.

Probable pseudophosphatase. This chain is Myotubularin-related protein 9-like, found in Bos taurus (Bovine).